The following is a 935-amino-acid chain: Bifunctional alpha-galactosidase/sucrose kinase AgaSK (935 aa).

An alpha-galactosidase region spans residues 1–720 (MAIIYNPNKK…EAYQFAFTEL (720 aa)). Mg(2+) is bound by residues glutamate 176, glutamate 277, and phenylalanine 280. Residues 366–367 (DD), arginine 443, 476–480 (KWDMN), and 518–521 (CSGG) each bind substrate. The active-site Nucleophile is aspartate 526. Aspartate 540 contacts substrate. The Proton donor/acceptor role is filled by glutamate 606. A sucrose kinase region spans residues 721 to 935 (KEAGRLYEKV…VGKDGSVYEQ (215 aa)). Residues 748–752 (GGSGS) and alanine 824 each bind ATP.

The protein in the N-terminal section; belongs to the glycosyl hydrolase 36 family. In the C-terminal section; belongs to the uridine kinase family. As to quaternary structure, homotetramer. The cofactor is Mg(2+).

It catalyses the reaction Hydrolysis of terminal, non-reducing alpha-D-galactose residues in alpha-D-galactosides, including galactose oligosaccharides, galactomannans and galactolipids.. Bifunctional enzyme with alpha-galactosidase and sucrose kinase activities. Produces sucrose-6-phosphate directly from raffinose. Binds ATP. Phosphorylates sucrose specifically on the C6 position of glucose in the presence of ATP. Hydrolyzes melibiose, raffinose, stachyose and synthetic substrate p-nitrophenyl-alpha-D-galactopyranoside with high activity. Low activity against locust bean gum, guar gum and synthetic substrates xylose alpha-D-4-nitrophenol, glucose alpha-D-4-nitrophenol and o-nitrophenyl-alpha-D-galactopyranoside. The polypeptide is Bifunctional alpha-galactosidase/sucrose kinase AgaSK (Mediterraneibacter gnavus (Ruminococcus gnavus)).